We begin with the raw amino-acid sequence, 214 residues long: Probable nicotinate-nucleotide adenylyltransferase (214 aa).

The protein belongs to the NadD family.

It carries out the reaction nicotinate beta-D-ribonucleotide + ATP + H(+) = deamido-NAD(+) + diphosphate. It participates in cofactor biosynthesis; NAD(+) biosynthesis; deamido-NAD(+) from nicotinate D-ribonucleotide: step 1/1. Its function is as follows. Catalyzes the reversible adenylation of nicotinate mononucleotide (NaMN) to nicotinic acid adenine dinucleotide (NaAD). This chain is Probable nicotinate-nucleotide adenylyltransferase, found in Pseudomonas aeruginosa (strain UCBPP-PA14).